The chain runs to 221 residues: Putative hemin import ATP-binding protein HrtA (221 aa).

The region spanning 3–221 is the ABC transporter domain; sequence LQLKHITKTF…IEIQDGKIEL (219 aa). ATP is bound at residue 39–46; the sequence is GASGSGKS.

The protein belongs to the ABC transporter superfamily. HrtA family. The complex is composed of two ATP-binding proteins (HrtA), two transmembrane proteins (HrtB) and a solute-binding protein.

It localises to the cell membrane. Functionally, part of the ABC transporter complex hrt involved in hemin import. Responsible for energy coupling to the transport system. This Staphylococcus haemolyticus (strain JCSC1435) protein is Putative hemin import ATP-binding protein HrtA (hrtA).